A 110-amino-acid chain; its full sequence is Iron-sulfur cluster assembly protein CyaY (110 aa).

It belongs to the frataxin family.

Involved in iron-sulfur (Fe-S) cluster assembly. May act as a regulator of Fe-S biogenesis. The chain is Iron-sulfur cluster assembly protein CyaY from Variovorax paradoxus (strain S110).